Consider the following 671-residue polypeptide: DNA ligase (671 aa).

NAD(+) contacts are provided by residues 32–36 (DVEYD), 81–82 (SL), and E114. K116 acts as the N6-AMP-lysine intermediate in catalysis. Positions 137, 175, 292, and 316 each coordinate NAD(+). The Zn(2+) site is built by C410, C413, C428, and C434. The region spanning 592–671 (EKNNYFSGKN…AEFYQILGIR (80 aa)) is the BRCT domain.

The protein belongs to the NAD-dependent DNA ligase family. LigA subfamily. Mg(2+) is required as a cofactor. It depends on Mn(2+) as a cofactor.

It carries out the reaction NAD(+) + (deoxyribonucleotide)n-3'-hydroxyl + 5'-phospho-(deoxyribonucleotide)m = (deoxyribonucleotide)n+m + AMP + beta-nicotinamide D-nucleotide.. In terms of biological role, DNA ligase that catalyzes the formation of phosphodiester linkages between 5'-phosphoryl and 3'-hydroxyl groups in double-stranded DNA using NAD as a coenzyme and as the energy source for the reaction. It is essential for DNA replication and repair of damaged DNA. The polypeptide is DNA ligase (Baumannia cicadellinicola subsp. Homalodisca coagulata).